We begin with the raw amino-acid sequence, 189 residues long: Crossover junction endodeoxyribonuclease RuvC (189 aa).

Residues D12, E72, and D147 contribute to the active site. Mg(2+) is bound by residues D12, E72, and D147.

This sequence belongs to the RuvC family. As to quaternary structure, homodimer which binds Holliday junction (HJ) DNA. The HJ becomes 2-fold symmetrical on binding to RuvC with unstacked arms; it has a different conformation from HJ DNA in complex with RuvA. In the full resolvosome a probable DNA-RuvA(4)-RuvB(12)-RuvC(2) complex forms which resolves the HJ. Mg(2+) serves as cofactor.

The protein localises to the cytoplasm. It catalyses the reaction Endonucleolytic cleavage at a junction such as a reciprocal single-stranded crossover between two homologous DNA duplexes (Holliday junction).. Its function is as follows. The RuvA-RuvB-RuvC complex processes Holliday junction (HJ) DNA during genetic recombination and DNA repair. Endonuclease that resolves HJ intermediates. Cleaves cruciform DNA by making single-stranded nicks across the HJ at symmetrical positions within the homologous arms, yielding a 5'-phosphate and a 3'-hydroxyl group; requires a central core of homology in the junction. The consensus cleavage sequence is 5'-(A/T)TT(C/G)-3'. Cleavage occurs on the 3'-side of the TT dinucleotide at the point of strand exchange. HJ branch migration catalyzed by RuvA-RuvB allows RuvC to scan DNA until it finds its consensus sequence, where it cleaves and resolves the cruciform DNA. In Porphyromonas gingivalis (strain ATCC BAA-308 / W83), this protein is Crossover junction endodeoxyribonuclease RuvC.